The sequence spans 257 residues: Imidazole glycerol phosphate synthase subunit HisF (257 aa).

Residues Asp11 and Asp130 contribute to the active site.

Belongs to the HisA/HisF family. As to quaternary structure, heterodimer of HisH and HisF.

Its subcellular location is the cytoplasm. It carries out the reaction 5-[(5-phospho-1-deoxy-D-ribulos-1-ylimino)methylamino]-1-(5-phospho-beta-D-ribosyl)imidazole-4-carboxamide + L-glutamine = D-erythro-1-(imidazol-4-yl)glycerol 3-phosphate + 5-amino-1-(5-phospho-beta-D-ribosyl)imidazole-4-carboxamide + L-glutamate + H(+). It functions in the pathway amino-acid biosynthesis; L-histidine biosynthesis; L-histidine from 5-phospho-alpha-D-ribose 1-diphosphate: step 5/9. IGPS catalyzes the conversion of PRFAR and glutamine to IGP, AICAR and glutamate. The HisF subunit catalyzes the cyclization activity that produces IGP and AICAR from PRFAR using the ammonia provided by the HisH subunit. This is Imidazole glycerol phosphate synthase subunit HisF from Psychromonas ingrahamii (strain DSM 17664 / CCUG 51855 / 37).